The chain runs to 189 residues: dTTP/UTP pyrophosphatase (189 aa).

Asp-71 acts as the Proton acceptor in catalysis.

It belongs to the Maf family. YhdE subfamily. The cofactor is a divalent metal cation.

The protein localises to the cytoplasm. It catalyses the reaction dTTP + H2O = dTMP + diphosphate + H(+). It carries out the reaction UTP + H2O = UMP + diphosphate + H(+). Nucleoside triphosphate pyrophosphatase that hydrolyzes dTTP and UTP. May have a dual role in cell division arrest and in preventing the incorporation of modified nucleotides into cellular nucleic acids. The protein is dTTP/UTP pyrophosphatase of Pseudoalteromonas translucida (strain TAC 125).